Reading from the N-terminus, the 160-residue chain is SsrA-binding protein (160 aa).

This sequence belongs to the SmpB family.

It is found in the cytoplasm. Functionally, required for rescue of stalled ribosomes mediated by trans-translation. Binds to transfer-messenger RNA (tmRNA), required for stable association of tmRNA with ribosomes. tmRNA and SmpB together mimic tRNA shape, replacing the anticodon stem-loop with SmpB. tmRNA is encoded by the ssrA gene; the 2 termini fold to resemble tRNA(Ala) and it encodes a 'tag peptide', a short internal open reading frame. During trans-translation Ala-aminoacylated tmRNA acts like a tRNA, entering the A-site of stalled ribosomes, displacing the stalled mRNA. The ribosome then switches to translate the ORF on the tmRNA; the nascent peptide is terminated with the 'tag peptide' encoded by the tmRNA and targeted for degradation. The ribosome is freed to recommence translation, which seems to be the essential function of trans-translation. This is SsrA-binding protein from Photorhabdus laumondii subsp. laumondii (strain DSM 15139 / CIP 105565 / TT01) (Photorhabdus luminescens subsp. laumondii).